The sequence spans 190 residues: Guanylate kinase (190 aa).

In terms of domain architecture, Guanylate kinase-like spans 3–185 (NYIFIVSAPS…SLEQFCKYFE (183 aa)). 10–17 (APSGAGKS) serves as a coordination point for ATP.

Belongs to the guanylate kinase family.

It is found in the cytoplasm. The enzyme catalyses GMP + ATP = GDP + ADP. Functionally, essential for recycling GMP and indirectly, cGMP. The sequence is that of Guanylate kinase from Francisella tularensis subsp. tularensis (strain FSC 198).